A 380-amino-acid chain; its full sequence is MKKPLGKIVASTALLISVAFSSSIASAAEEAKEKYLIGFNEQEAVSEFVEQVEANDEVAILSEEEEVEIELLHEFETIPVLSVELSPEDVDALELDPAISYIEEDAEVTTMAQSVPWGISRVQAPAAHNRGLTGSGVKVAVLDTGISTHPDLNIRGGASFVPGEPSTQDGNGHGTHVAGTIAALNNSIGVLGVAPNAELYAVKVLGASGSGSVSSIAQGLEWAGNNGMHVANLSLGSPSPSATLEQAVNSATSRGVLVVAASGNSGAGSISYPARYANAMAVGATDQNNNRASFSQYGAGLDIVAPGVNVQSTYPGSTYASLNGTSMATPHVAGAAALVKQKNPSWSNVQIRNHLKNTATSLGSTNLYGSGLVNAEAATR.

An N-terminal signal peptide occupies residues 1–27 (MKKPLGKIVASTALLISVAFSSSIASA). The propeptide occupies 28-112 (AEEAKEKYLI…EEDAEVTTMA (85 aa)). Residues 34-111 (KYLIGFNEQE…IEEDAEVTTM (78 aa)) enclose the Inhibitor I9 domain. Q113 contacts Ca(2+). A Peptidase S8 domain is found at 116 to 379 (PWGISRVQAP…SGLVNAEAAT (264 aa)). D143 functions as the Charge relay system in the catalytic mechanism. A Ca(2+)-binding site is contributed by D151. H173 acts as the Charge relay system in catalysis. 7 residues coordinate Ca(2+): L184, N186, I188, V190, A274, Y276, and A279. Catalysis depends on S326, which acts as the Charge relay system.

This sequence belongs to the peptidase S8 family. The cofactor is Ca(2+).

The protein localises to the secreted. In Alkalihalobacillus alcalophilus (Bacillus alcalophilus), this protein is Alkaline protease.